A 104-amino-acid chain; its full sequence is Large ribosomal subunit protein uL24 (104 aa).

It belongs to the universal ribosomal protein uL24 family. As to quaternary structure, part of the 50S ribosomal subunit.

In terms of biological role, one of two assembly initiator proteins, it binds directly to the 5'-end of the 23S rRNA, where it nucleates assembly of the 50S subunit. Functionally, one of the proteins that surrounds the polypeptide exit tunnel on the outside of the subunit. The sequence is that of Large ribosomal subunit protein uL24 from Colwellia psychrerythraea (strain 34H / ATCC BAA-681) (Vibrio psychroerythus).